The primary structure comprises 322 residues: MDIHFEEGVLSPSATDMRPEPPNSLDLNGSHPRRIKLTAPNINLSLDQSEGSILSDDNLDSPDEIDINVDELDTPDEADSFEYPGHEDPMANRSSGQESESIPEYTAEEEREDNRLWRTVVIGEQEQRIDMKVIEPYRRVISHGGYYGDGLNAIIVFAACFLPDSSRADYHYVMENLFLYVISTLELMVAEDYMIVYLNGATPRRKMPGLGWMKKCYQMIDRRLRKNLKSFIIVHPSWFIRTILAVTRPFISSKFSSKIKYVSSLSELSGLIPMDCIHIPESIIKYDEEKSFKRSVRTSCLYNDPEMTSMEKDIDMKLKEKP.

A disordered region spans residues 1-110 (MDIHFEEGVL…SIPEYTAEEE (110 aa)). Residues 40-52 (PNINLSLDQSEGS) are compositionally biased toward polar residues. Residues 57-80 (DNLDSPDEIDINVDELDTPDEADS) are compositionally biased toward acidic residues. In terms of domain architecture, CRAL-TRIO spans 130–291 (DMKVIEPYRR…SIIKYDEEKS (162 aa)).

It localises to the cytoplasm. In terms of biological role, may play an important role in regulating differentiation, survival and aggressiveness of the tumor cells. This chain is Protein prune homolog 2 (Prune2), found in Rattus norvegicus (Rat).